The primary structure comprises 179 residues: Inner membrane-spanning protein YciB (179 aa).

5 consecutive transmembrane segments (helical) span residues 11-31, 52-69, 71-91, 121-141, and 149-169; these read ILFF…TLII, LIMG…AYFN, LEFL…ILLV, LGWA…SQYL, and FKTF…GVYI.

The protein belongs to the YciB family.

The protein localises to the cell inner membrane. Its function is as follows. Plays a role in cell envelope biogenesis, maintenance of cell envelope integrity and membrane homeostasis. The polypeptide is Inner membrane-spanning protein YciB (Histophilus somni (strain 129Pt) (Haemophilus somnus)).